Consider the following 112-residue polypeptide: DNA-binding protein Mboo_1886 (112 aa).

It belongs to the PDCD5 family.

The chain is DNA-binding protein Mboo_1886 from Methanoregula boonei (strain DSM 21154 / JCM 14090 / 6A8).